A 232-amino-acid chain; its full sequence is Large ribosomal subunit protein uL1 (232 aa).

This sequence belongs to the universal ribosomal protein uL1 family. Part of the 50S ribosomal subunit.

Its function is as follows. Binds directly to 23S rRNA. The L1 stalk is quite mobile in the ribosome, and is involved in E site tRNA release. Functionally, protein L1 is also a translational repressor protein, it controls the translation of the L11 operon by binding to its mRNA. The chain is Large ribosomal subunit protein uL1 from Porphyromonas gingivalis (strain ATCC 33277 / DSM 20709 / CIP 103683 / JCM 12257 / NCTC 11834 / 2561).